The sequence spans 282 residues: Bis(5'-nucleosyl)-tetraphosphatase, symmetrical (282 aa).

The protein belongs to the Ap4A hydrolase family.

The enzyme catalyses P(1),P(4)-bis(5'-adenosyl) tetraphosphate + H2O = 2 ADP + 2 H(+). In terms of biological role, hydrolyzes diadenosine 5',5'''-P1,P4-tetraphosphate to yield ADP. This Sodalis glossinidius (strain morsitans) protein is Bis(5'-nucleosyl)-tetraphosphatase, symmetrical.